The following is a 300-amino-acid chain: Glycine betaine/carnitine transport binding protein GbuC (300 aa).

An N-terminal signal peptide occupies residues 1 to 20 (MLKKLITTAVLAMLIFTLAA). A lipid anchor (N-palmitoyl cysteine) is attached at Cys-21. Cys-21 is lipidated: S-diacylglycerol cysteine.

As to quaternary structure, the complex is composed of two ATP-binding proteins (GbuA), two transmembrane proteins (GbuB) and a solute-binding protein (GbuC).

It is found in the cell membrane. The complex is activated by an osmotic gradient or by low temperature. In terms of biological role, part of the ABC transporter complex GbuABC involved in glycine betaine uptake. Involved, with BetL and OpuC, in osmoprotection and cryoprotection of Listeria. Can also uptake carnitine when carnitine is abundant in the growth medium. In Listeria monocytogenes serotype 1/2a (strain 10403S), this protein is Glycine betaine/carnitine transport binding protein GbuC (gbuC).